The sequence spans 1969 residues: MTLGIFANCIFCLKVKYLPRQQKKKLQTDIKENGGKFSFLLNPQCTHVIVDSADVLSRCHLNSIQKNDVQIANPAFIQDSVRQRRLLDVRNYDPLSPAPAAPPAERSRSEVQSEYLPSDNTPEKENTEVTEVSAENVEIPPFLQDFEVVKYNILEKVGGPETVVVELQSSQDPESCPFVITAHFLLADQKTRRESTGKQTSEGAIEYYESYVEDLKRQGFLLQEHFTAEATQLASEKLQALLLEEVISSGALSQEVSDLLEVIWTEALGHLENTLLKPVNSMSLNDVSKAEGILLLVKTALKNGDSPGQLQKTMAEFYRLLPHRHPASEEVNLRLLAQKEDLCQLVRDMVNVCETNLSKPNPPSLAKYRALRCKIEHVDQNTEEFSRVRKEVLQNNRSEQPVDILQIFRVGRVNEATEFLSKLGNVRLLFHGSPVRNILGILSRGLLLPKVAEDRGVQRTDVGNLGSGIYFSDSLSTSIKYAHAGETDGSRLLVVCDVALGKCVNLFKKDFSLTEAPPGYDSVHGVSETTSVPTDFQDDEFVVYKTNQVKMKYIVKFCTPGDQIKEFHPHENTEVEEQRAEPSSVPEAGDFQLPDIKPFTNIKAGLQDASANPVPLDSVHIKGRVIDFVAQVIVFQTYTNQSHVPIEAKYIFPLDDKAAVCGFEAFINGKHIVGEIKEKEEARQEYREAVSQGHGAYLMDQDTPDVFTVSVGNLPPRAKVLIKITYITELSIQSPVAIFFIPGTVAPWQQDKALNENLQDTVETIRIKEIGAEQSFSLAMSIEMPYMIEFISSDTHELRQKSTDCKAVVSTVEGSSLDSGGFSLHIGLRDAYLPRMWVEKHPEKESEACMLVFQPELADVLPDLRGKNEVIICLDCSSSMEGVTFTQAKQVALYALSLLGEEQKVNIMQFGTGYKELFSYPKCITDSKMATEFIMSAAPSMGNTDFWKVLRYLSLLYPSEGFRNILLISDGHLQSESLTLQLVKRNIQHTRVFTCAVGSTANRHILRTLSQCGAGVFEYFNSKSKHSWKKQIEAQMTRIRSPSCHSVSVKWQQLSRDAPEPLQAPAWVPSLFHNDRLLVYGFIPHCTQATLQAFIQEKEFCTMVSTTELQKTTGTMIHKLAARALIRDYEDGILHDDETNHEMKKNIMKSLIIELSKENSLITQFTSFVAVEKRDVNEIPFANVPNISELVAKEDVDFLPYVSWQEKQPEASISQTEIDSSRLKHNKLSDGHGVLQPVSVSSEVNEKPSLLLAAKKRKIKTIKKCSLDISEDFEDRTAVAQSPATAQSLNFHLPLSVRPQLKAVEQQLHGNRLEPKQRGGFRKLLMAKKCRNVPDSLVSSAPAVTAEFSYLSACSSSSAFLSPLCDIPSSLPPHPLGGTHPPPPLPLPDGTHLPSPLFGSTHPPPPLFGGTLIPPPSSLFGGTHLPPPPPLPGGTHIPPPPPIPGGTLIPPSSSLFGGTHLPPPPLLSAGTHIPPPPLLSAGTHLPPPPLLPAGTHIPPPPPITGSTHPPPPSSLFGGTHLPPPPPLPGGTHIPPPPPIPGGTLIPSPSSLFGGTHLPPPPLLPAGTHIPPPPPITGSTHPPPPSSLFGGTHLPPPPPAGTQFSLSPIGFIPPKLGPPKLSHSHKLVGDTNIHDSEPPLLGFKDLCSRDMGFSCGTAFSGSFASSKDFDPGKFSQGPNNISFSPKAPEMGVLHQSPFCSPPKPPSAPPLVTNVLCSEAPQSYFLNLQSAAVHQSPNNRVSEIIMESVESSLPSDYSSRDASSYLALEGAEDSLLGGSSFETDTDEAAAFIANDLLTSIETSSDEECAFCDEDQESPVPWASLFALQTENGFWKLTPELGLILNLNVNALLTSLEEKGIRSLGTKGRERLLDLIATLLVLQFLYTKLEQEGMVAKSLIKMDDAFISRNIPWAFENIKKAREWARKTEGQYPSICQRLELGKDWESATKQLLGIQPQANTSLHRILYYSQG.

A BRCT domain is found at Met1–Pro94. A Nuclear localization signal motif is present at residues Pro19–Lys25. Residues Tyr92–Val132 are disordered. A PARP alpha-helical domain is found at Ser235–Pro363. Positions Pro362–Glu566 constitute a PARP catalytic domain. The VIT domain maps to Thr600–Thr728. The VWFA domain occupies Glu869–Ile1039. Ser1229 carries the post-translational modification Phosphoserine. The Nuclear localization signal signature appears at Asp1230–Ser1242. Pro residues-rich tracts occupy residues Pro1372–Leu1387, His1402–Ser1417, Leu1425–Pro1444, Leu1485–Ser1513, and Leu1521–Pro1540. Residues Pro1372 to Ile1608 are disordered. One can recognise an FH1 domain in the interval Ile1443–Gly1541. Low complexity predominate over residues Gly1541 to His1556. Over residues Leu1557–Ser1585 the composition is skewed to pro residues. The segment at Phe1808–Gly1969 is interaction with the major vault protein.

The protein belongs to the ARTD/PARP family. In terms of assembly, component of the vault ribonucleoprotein particle, at least composed of MVP, PARP4 and one or more vault RNAs (vRNAs). Interacts with TEP1.

Its subcellular location is the cytoplasm. The protein resides in the nucleus. The enzyme catalyses L-aspartyl-[protein] + NAD(+) = 4-O-(ADP-D-ribosyl)-L-aspartyl-[protein] + nicotinamide. The catalysed reaction is L-glutamyl-[protein] + NAD(+) = 5-O-(ADP-D-ribosyl)-L-glutamyl-[protein] + nicotinamide. Mono-ADP-ribosyltransferase that mediates mono-ADP-ribosylation of target proteins. This Mus musculus (Mouse) protein is Protein mono-ADP-ribosyltransferase PARP4.